We begin with the raw amino-acid sequence, 1174 residues long: Nucleolar complex protein 1 (1174 aa).

Disordered stretches follow at residues 1–20 (MPAA…NKKI), 29–237 (VVKQ…EESQ), 715–742 (YEDV…VKSS), 893–922 (AQNK…LKEG), 944–1085 (GVDE…GGRS), and 1116–1174 (VKGQ…KRKH). Positions 33–63 (NKKEHPQRPKFEGKEQVKKPQKIKFGEDGKA) are enriched in basic and acidic residues. Residues 95–104 (ASKSFNQNHK) are compositionally biased toward polar residues. Composition is skewed to basic and acidic residues over residues 113–122 (KFGEDREAVH) and 176–200 (KFGD…EDGA). Acidic residues-rich tracts occupy residues 207–216 (SDGDSDEELG) and 715–724 (YEDVKDEADD). 2 stretches are compositionally biased toward basic and acidic residues: residues 725–739 (TKDS…DNDV) and 897–906 (KQKEIKKDAA). Acidic residues-rich tracts occupy residues 907–916 (EEGDDGEAGE), 945–954 (VDEEQDEEEL), 981–1038 (AEDE…DEGS), and 1048–1065 (DSSD…DDED). The segment covering 1127 to 1143 (NKDKSSDKQLKWEENRR) has biased composition (basic and acidic residues). Positions 1156-1166 (GKPAAKGGRPQ) are enriched in low complexity.

Belongs to the CBF/MAK21 family.

The protein localises to the nucleus. It is found in the nucleolus. Its function is as follows. Involved in rRNA processing and ribosome maturation. May also act as a transcription factor. This chain is Nucleolar complex protein 1, found in Drosophila melanogaster (Fruit fly).